The primary structure comprises 285 residues: Acetyl-coenzyme A carboxylase carboxyl transferase subunit beta 2 (285 aa).

The segment at 1–20 (MAIRSLFSGNRKKKEDGQEK) is disordered. The region spanning 26 to 285 (LMTKCPECRH…MHTKGGVQHV (260 aa)) is the CoA carboxyltransferase N-terminal domain. Residues cysteine 30, cysteine 33, cysteine 49, and cysteine 52 each coordinate Zn(2+). The segment at 30-52 (CPECRHIQLTKELEKNHKVCTKC) adopts a C4-type zinc-finger fold.

The protein belongs to the AccD/PCCB family. In terms of assembly, acetyl-CoA carboxylase is a heterohexamer composed of biotin carboxyl carrier protein (AccB), biotin carboxylase (AccC) and two subunits each of ACCase subunit alpha (AccA) and ACCase subunit beta (AccD). Zn(2+) is required as a cofactor.

The protein localises to the cytoplasm. It carries out the reaction N(6)-carboxybiotinyl-L-lysyl-[protein] + acetyl-CoA = N(6)-biotinyl-L-lysyl-[protein] + malonyl-CoA. The protein operates within lipid metabolism; malonyl-CoA biosynthesis; malonyl-CoA from acetyl-CoA: step 1/1. Functionally, component of the acetyl coenzyme A carboxylase (ACC) complex. Biotin carboxylase (BC) catalyzes the carboxylation of biotin on its carrier protein (BCCP) and then the CO(2) group is transferred by the transcarboxylase to acetyl-CoA to form malonyl-CoA. This Lysinibacillus sphaericus (strain C3-41) protein is Acetyl-coenzyme A carboxylase carboxyl transferase subunit beta 2.